The primary structure comprises 268 residues: Early nodulin-20 (268 aa).

The N-terminal stretch at M1–S24 is a signal peptide. Residues T25–V129 form the Phytocyanin domain. N-linked (GlcNAc...) asparagine glycosylation is present at N67. A disulfide bridge connects residues C83 and C117. 2 stretches are compositionally biased toward pro residues: residues S134–P145 and P160–P185. Positions S134–H253 are disordered. The segment covering P199–P235 has biased composition (low complexity). S243 is lipidated: GPI-anchor amidated serine. The propeptide at S244 to F268 is removed in mature form.

It belongs to the early nodulin-like (ENODL) family.

It is found in the cell membrane. In terms of biological role, may act as a carbohydrate transporter. The sequence is that of Early nodulin-20 from Medicago truncatula (Barrel medic).